The primary structure comprises 176 residues: Peptidoglycan-associated lipoprotein (176 aa).

The N-terminal stretch at 1 to 21 (MKAGSFYKLGLLVASAVLVAA) is a signal peptide. Cys-22 carries N-palmitoyl cysteine lipidation. Cys-22 carries the S-diacylglycerol cysteine lipid modification. The OmpA-like domain maps to 60-176 (YTTQAPHNQL…RVEFIYEATR (117 aa)).

This sequence belongs to the Pal lipoprotein family. The Tol-Pal system is composed of five core proteins: the inner membrane proteins TolA, TolQ and TolR, the periplasmic protein TolB and the outer membrane protein Pal. They form a network linking the inner and outer membranes and the peptidoglycan layer.

The protein resides in the cell outer membrane. In terms of biological role, part of the Tol-Pal system, which plays a role in outer membrane invagination during cell division and is important for maintaining outer membrane integrity. Very strongly associated with the peptidoglycan. This is Peptidoglycan-associated lipoprotein from Legionella pneumophila.